Here is a 215-residue protein sequence, read N- to C-terminus: Chaperone protein TorD (215 aa).

This sequence belongs to the TorD/DmsD family. TorD subfamily.

The protein resides in the cytoplasm. Involved in the biogenesis of TorA. Acts on TorA before the insertion of the molybdenum cofactor and, as a result, probably favors a conformation of the apoenzyme that is competent for acquiring the cofactor. The polypeptide is Chaperone protein TorD (Vibrio atlanticus (strain LGP32) (Vibrio splendidus (strain Mel32))).